Reading from the N-terminus, the 331-residue chain is HTH-type transcriptional regulator GntR (331 aa).

Residues 6-60 (PVLQDVADRVGVTKMTVSRFLRNPEQVSVALRGKIAAALDELGYIPNRAPDILSN) enclose the HTH lacI-type domain. The segment at residues 8–27 (LQDVADRVGVTKMTVSRFLR) is a DNA-binding region (H-T-H motif).

The protein operates within carbohydrate acid metabolism; D-gluconate degradation [regulation]. Its function is as follows. Negative regulator for the gluconate utilization system GNT-I, the gntUKR operon. The polypeptide is HTH-type transcriptional regulator GntR (gntR) (Escherichia coli O6:H1 (strain CFT073 / ATCC 700928 / UPEC)).